The following is a 393-amino-acid chain: Protein TsgA (393 aa).

Transmembrane regions (helical) follow at residues 11-31, 51-71, 78-98, 101-121, 134-154, 162-182, 206-226, 245-265, 273-293, 297-317, 332-352, and 361-381; these read WISF…GMVM, FLNA…EIVP, FGFL…SLAL, AAMF…TFLI, LLFT…IAAF, WYWV…LTFG, IGVL…LGFI, TLVS…SFIL, ILTV…TGTP, AWSI…IITL, FVLT…GPIV, and LLTA…LGFV.

Belongs to the major facilitator superfamily. TsgA family.

Its subcellular location is the cell inner membrane. The sequence is that of Protein TsgA from Escherichia coli O7:K1 (strain IAI39 / ExPEC).